Reading from the N-terminus, the 94-residue chain is Small ribosomal subunit protein bS18 (94 aa).

This sequence belongs to the bacterial ribosomal protein bS18 family. Part of the 30S ribosomal subunit. Forms a tight heterodimer with protein bS6.

Binds as a heterodimer with protein bS6 to the central domain of the 16S rRNA, where it helps stabilize the platform of the 30S subunit. This chain is Small ribosomal subunit protein bS18, found in Leptothrix cholodnii (strain ATCC 51168 / LMG 8142 / SP-6) (Leptothrix discophora (strain SP-6)).